The chain runs to 232 residues: Probable proteasome subunit alpha type-3 (232 aa).

It belongs to the peptidase T1A family. In terms of assembly, the 26S proteasome consists of a 20S proteasome core and two 19S regulatory subunits. The 20S proteasome core is composed of 28 subunits that are arranged in four stacked rings, resulting in a barrel-shaped structure. The two end rings are each formed by seven alpha subunits, and the two central rings are each formed by seven beta subunits. The catalytic chamber with the active sites is on the inside of the barrel.

It localises to the cytoplasm. The protein localises to the nucleus. The proteasome degrades poly-ubiquitinated proteins in the cytoplasm and in the nucleus. It is essential for the regulated turnover of proteins and for the removal of misfolded proteins. The proteasome is a multicatalytic proteinase complex that is characterized by its ability to cleave peptides with Arg, Phe, Tyr, Leu, and Glu adjacent to the leaving group at neutral or slightly basic pH. It has an ATP-dependent proteolytic activity. This Encephalitozoon cuniculi (strain GB-M1) (Microsporidian parasite) protein is Probable proteasome subunit alpha type-3 (PRE9).